The sequence spans 572 residues: Urease subunit alpha (572 aa).

Residues 134–572 (AGIDSHIHLI…AAMNQRYFFG (439 aa)) enclose the Urease domain. Histidine 139, histidine 141, and lysine 222 together coordinate Ni(2+). N6-carboxylysine is present on lysine 222. Histidine 224 serves as a coordination point for substrate. 2 residues coordinate Ni(2+): histidine 251 and histidine 277. The active-site Proton donor is the histidine 325. Position 365 (aspartate 365) interacts with Ni(2+).

It belongs to the metallo-dependent hydrolases superfamily. Urease alpha subunit family. Heterotrimer of UreA (gamma), UreB (beta) and UreC (alpha) subunits. Three heterotrimers associate to form the active enzyme. Requires Ni cation as cofactor. In terms of processing, carboxylation allows a single lysine to coordinate two nickel ions.

It is found in the cytoplasm. It catalyses the reaction urea + 2 H2O + H(+) = hydrogencarbonate + 2 NH4(+). Its pathway is nitrogen metabolism; urea degradation; CO(2) and NH(3) from urea (urease route): step 1/1. The chain is Urease subunit alpha from Yersinia enterocolitica serotype O:8 / biotype 1B (strain NCTC 13174 / 8081).